Consider the following 164-residue polypeptide: MAGEKMVRDISGVYARLFDHRAVLQAECKYMLREFEGKRNDRELERLRESEQKIRQVQEEIPKCITESVKLKDLLEELKVAREKCHEILVKEEQDLFKERREEIFIESKKNWETFIGEIAEEEKRIEEEFEQSAEKLRARYGVQLVRNPKEPDDKGELQPQEIA.

Positions 36-91 (EGKRNDRELERLRESEQKIRQVQEEIPKCITESVKLKDLLEELKVAREKCHEILVK) form a coiled coil.

The protein belongs to the BLOC1S5 family. In terms of assembly, component of the biogenesis of lysosome-related organelles complex 1 (BLOC-1).

Its function is as follows. Component of the BLOC-1 complex, a complex that is required for normal biogenesis of lysosome-related organelles (LRO). May play a role in intracellular vesicle trafficking. This Nematostella vectensis (Starlet sea anemone) protein is Biogenesis of lysosome-related organelles complex 1 subunit 5 (bloc1s5).